Reading from the N-terminus, the 133-residue chain is Large ribosomal subunit protein uL15 (133 aa).

The segment at 1-64 is disordered; the sequence is MGLENLKPAK…QPLQRRLPKI (64 aa).

This sequence belongs to the universal ribosomal protein uL15 family. Part of the 50S ribosomal subunit.

In terms of biological role, binds to the 23S rRNA. This chain is Large ribosomal subunit protein uL15, found in Helicobacter pylori (strain J99 / ATCC 700824) (Campylobacter pylori J99).